A 380-amino-acid polypeptide reads, in one-letter code: uncharacterized protein (380 aa).

2 HTH tetR-type domains span residues Glu-3–Leu-63 and Val-201–Ile-262. Positions Thr-225–Tyr-244 form a DNA-binding region, H-T-H motif.

This is an uncharacterized protein from Bacillus subtilis (strain 168).